Reading from the N-terminus, the 146-residue chain is MMDINEIREYLPHRYPFLLVDRVVDLDVEGQRIRAYKNVSINEPFFNGHFPQHPIMPGVLIIEAMAQAAGILGFKMLDVKPADGTIYYFVGSDKMRFRQPVIPGDQLILEARFLSAKRSIWKFECQALVDDKQVCSGEIICAERKL.

Residue His49 is part of the active site.

Belongs to the thioester dehydratase family. FabZ subfamily.

It is found in the cytoplasm. The catalysed reaction is a (3R)-hydroxyacyl-[ACP] = a (2E)-enoyl-[ACP] + H2O. Its function is as follows. Involved in unsaturated fatty acids biosynthesis. Catalyzes the dehydration of short chain beta-hydroxyacyl-ACPs and long chain saturated and unsaturated beta-hydroxyacyl-ACPs. The protein is 3-hydroxyacyl-[acyl-carrier-protein] dehydratase FabZ of Azotobacter vinelandii (strain DJ / ATCC BAA-1303).